Consider the following 425-residue polypeptide: MNYARFITATSAARKPSTIRVMTEILSKAPKSVISLATGAPNPNTFPFKTAVITIENGKPIQFNEQMMKRALQYSQSAGIPELLSWLKQLQVKLHNPPTIHYAPTQGQMDLCVTCGSQEGLCKVFEMIVNPGDNILVNEPIYSGTIHALQPLGCNMINVSSDEHGIIPDSLREILSKWKPEDSKNPKKNSPKFLYTVPNGNNPSGNSLTAERKREIYELARKYDFLIIEDDPYYFMQFNKPWAPTFLSMDEDGRVIRADSFSKVLSSGLRIGFITGPKPLIERIVLHIQVSTMHPSTFAQLLVSQLLYQWGEEGFLGHVDRVIDFYRKQRDALMAAADKWLSGLAEWHVPTAGMFLWVKIKGIHDVRKLIEEKAFKKEIFMLPGCGFYTDSSAPCPYFRASFSSASPEQMDLAFQRLAQLIKESL.

The transit peptide at 1–29 directs the protein to the mitochondrion; that stretch reads MNYARFITATSAARKPSTIRVMTEILSKA. Arg-20 is a binding site for substrate. The residue at position 69 (Lys-69) is an N6-acetyllysine. Residues Tyr-74 and Tyr-142 each contribute to the substrate site. A disordered region spans residues 178 to 208; the sequence is WKPEDSKNPKKNSPKFLYTVPNGNNPSGNSL. Lys-179 carries the N6-acetyllysine modification. Residues 198-208 are compositionally biased toward polar residues; the sequence is PNGNNPSGNSL. Position 202 (Asn-202) interacts with substrate. An N6-(pyridoxal phosphate)lysine; alternate modification is found at Lys-263. 2 positions are modified to N6-acetyllysine; alternate: Lys-263 and Lys-339. N6-succinyllysine; alternate is present on residues Lys-263 and Lys-339. Residue Arg-399 participates in substrate binding. Position 422 is an N6-acetyllysine (Lys-422).

Belongs to the class-I pyridoxal-phosphate-dependent aminotransferase family. In terms of assembly, homodimer. It depends on pyridoxal 5'-phosphate as a cofactor.

Its subcellular location is the mitochondrion. The enzyme catalyses L-kynurenine + 2-oxoglutarate = kynurenate + L-glutamate + H2O. The catalysed reaction is L-2-aminoadipate + 2-oxoglutarate = 2-oxoadipate + L-glutamate. It catalyses the reaction glycine + 2-oxoglutarate = glyoxylate + L-glutamate. It carries out the reaction L-kynurenine + glyoxylate = kynurenate + glycine + H2O. The enzyme catalyses 3-hydroxy-L-kynurenine + glyoxylate = xanthurenate + glycine + H2O. The catalysed reaction is 2-oxohexanoate + L-kynurenine = L-2-aminohexanoate + kynurenate + H2O. It catalyses the reaction 3-phenylpyruvate + L-kynurenine = kynurenate + L-phenylalanine + H2O. It carries out the reaction 4-methylsulfanyl-2-oxobutanoate + L-kynurenine = kynurenate + L-methionine + H2O. The enzyme catalyses 2-oxo-3-sulfanylpropanoate + L-kynurenine = kynurenate + L-cysteine + H2O. The catalysed reaction is indole-3-pyruvate + L-kynurenine = kynurenate + L-tryptophan + H2O. It catalyses the reaction 2-oxopentanoate + L-kynurenine = L-2-aminopentanoate + kynurenate + H2O. It carries out the reaction 4-methyl-2-oxopentanoate + L-kynurenine = kynurenate + L-leucine + H2O. The enzyme catalyses glyoxylate + L-methionine = 4-methylsulfanyl-2-oxobutanoate + glycine. The catalysed reaction is L-2-aminoadipate + glyoxylate = 2-oxoadipate + glycine. It catalyses the reaction L-tyrosine + glyoxylate = 3-(4-hydroxyphenyl)pyruvate + glycine. It carries out the reaction glyoxylate + L-phenylalanine = 3-phenylpyruvate + glycine. The enzyme catalyses L-tryptophan + glyoxylate = indole-3-pyruvate + glycine. The catalysed reaction is L-leucine + glyoxylate = 4-methyl-2-oxopentanoate + glycine. It catalyses the reaction 2-oxobutanoate + L-kynurenine = (2S)-2-aminobutanoate + kynurenate + H2O. It carries out the reaction 2-oxoadipate + L-kynurenine = L-2-aminoadipate + kynurenate + H2O. The protein operates within amino-acid degradation; L-lysine degradation via saccharopine pathway; glutaryl-CoA from L-lysine: step 4/6. In terms of biological role, transaminase with broad substrate specificity. Has transaminase activity towards aminoadipate, kynurenine, methionine and glutamate. Shows activity also towards tryptophan, aspartate and hydroxykynurenine. Accepts a variety of oxo-acids as amino-group acceptors, with a preference for 2-oxoglutarate, 2-oxocaproic acid, phenylpyruvate and alpha-oxo-gamma-methiol butyric acid. Can also use glyoxylate as amino-group acceptor (in vitro). This chain is Kynurenine/alpha-aminoadipate aminotransferase, mitochondrial, found in Bos taurus (Bovine).